Reading from the N-terminus, the 361-residue chain is Plasmid recombination enzyme (361 aa).

Tyr44 and Tyr114 together coordinate DNA. The segment at Arg331 to Leu361 is disordered.

This sequence belongs to the plasmid mobilization pre family.

Functionally, the interaction of the RSA site and the pre protein may not only serve a function in plasmid maintenance, but also contribute to the distribution of small antibiotic resistance plasmids among Gram-positive bacteria. The protein is Plasmid recombination enzyme (preA) of Lactiplantibacillus plantarum (Lactobacillus plantarum).